The following is a 501-amino-acid chain: Aldehyde dehydrogenase 1A1 (501 aa).

S2 is modified (N-acetylserine). An N6-acetyllysine mark is found at K91 and K128. NAD(+)-binding positions include 167–170 (IPWN), 193–196 (KPAE), 226–227 (GP), and 246–247 (GS). An N6-acetyllysine modification is found at K252. E269 serves as the catalytic Proton acceptor. 269-271 (ELG) contacts NAD(+). C303 functions as the Nucleophile in the catalytic mechanism. Residues 336–501 (LTQGINQGPQ…VAMKISQKNS (166 aa)) are mediates interaction with PRMT3. At T337 the chain carries Phosphothreonine. NAD(+) is bound at residue 349–353 (EQHDK). N6-acetyllysine is present on residues K353 and K367. Position 400–402 (400–402 (EIF)) interacts with NAD(+). Position 410 is an N6-acetyllysine (K410). A Phosphoserine modification is found at S413. N6-acetyllysine occurs at positions 419, 435, and 495.

The protein belongs to the aldehyde dehydrogenase family. As to quaternary structure, homotetramer. Interacts with PRMT3; the interaction is direct, inhibits ALDH1A1 aldehyde dehydrogenase activity and is independent of the methyltransferase activity of PRMT3. In terms of processing, the N-terminus is blocked most probably by acetylation. In terms of tissue distribution, strongly expressed in kidney, lung, testis, intestine, stomach, and trachea, but weakly in the liver.

It localises to the cytoplasm. It is found in the cytosol. Its subcellular location is the cell projection. The protein localises to the axon. The enzyme catalyses an aldehyde + NAD(+) + H2O = a carboxylate + NADH + 2 H(+). It carries out the reaction all-trans-retinal + NAD(+) + H2O = all-trans-retinoate + NADH + 2 H(+). The catalysed reaction is 9-cis-retinal + NAD(+) + H2O = 9-cis-retinoate + NADH + 2 H(+). It catalyses the reaction 11-cis-retinal + NAD(+) + H2O = 11-cis-retinoate + NADH + 2 H(+). The enzyme catalyses 13-cis-retinal + NAD(+) + H2O = 13-cis-retinoate + NADH + 2 H(+). It carries out the reaction 3-deoxyglucosone + NAD(+) + H2O = 2-dehydro-3-deoxy-D-gluconate + NADH + 2 H(+). The catalysed reaction is (E)-4-hydroxynon-2-enal + NAD(+) + H2O = (E)-4-hydroxynon-2-enoate + NADH + 2 H(+). It catalyses the reaction malonaldehyde + NAD(+) + H2O = 3-oxopropanoate + NADH + 2 H(+). The enzyme catalyses hexanal + NAD(+) + H2O = hexanoate + NADH + 2 H(+). It carries out the reaction propanal + NAD(+) + H2O = propanoate + NADH + 2 H(+). The catalysed reaction is acetaldehyde + NAD(+) + H2O = acetate + NADH + 2 H(+). It catalyses the reaction benzaldehyde + NAD(+) + H2O = benzoate + NADH + 2 H(+). The enzyme catalyses 4-aminobutanal + NAD(+) + H2O = 4-aminobutanoate + NADH + 2 H(+). It participates in cofactor metabolism; retinol metabolism. Its activity is regulated as follows. Inhibited by chloral hydrate. Functionally, cytosolic dehydrogenase that catalyzes the irreversible oxidation of a wide range of aldehydes to their corresponding carboxylic acid. Functions downstream of retinol dehydrogenases and catalyzes the oxidation of retinaldehyde into retinoic acid, the second step in the oxidation of retinol/vitamin A into retinoic acid. This pathway is crucial to control the levels of retinol and retinoic acid, two important molecules which excess can be teratogenic and cytotoxic. Also oxidizes aldehydes resulting from lipid peroxidation like (E)-4-hydroxynon-2-enal/HNE, malonaldehyde and hexanal that form protein adducts and are highly cytotoxic. By participating for instance to the clearance of (E)-4-hydroxynon-2-enal/HNE in the lens epithelium prevents the formation of HNE-protein adducts and lens opacification. Functions also downstream of fructosamine-3-kinase in the fructosamine degradation pathway by catalyzing the oxidation of 3-deoxyglucosone, the carbohydrate product of fructosamine 3-phosphate decomposition, which is itself a potent glycating agent that may react with lysine and arginine side-chains of proteins. Also has an aminobutyraldehyde dehydrogenase activity and is probably part of an alternative pathway for the biosynthesis of GABA/4-aminobutanoate in midbrain, thereby playing a role in GABAergic synaptic transmission. This chain is Aldehyde dehydrogenase 1A1, found in Rattus norvegicus (Rat).